The sequence spans 121 residues: MIQVESRLTVCDNSGAKEALCIRVLGGTKRRYASVGDVIVVSIKSVIPSSDVKKGAVSKALIVRTKKEIRRADGSYIRFDDNACVLLNNAGEIRGSRIFGPVARELRAANMKVVSLAPEVL.

The protein belongs to the universal ribosomal protein uL14 family. Part of the 50S ribosomal subunit. Forms a cluster with proteins L3 and L19. In the 70S ribosome, L14 and L19 interact and together make contacts with the 16S rRNA in bridges B5 and B8.

In terms of biological role, binds to 23S rRNA. Forms part of two intersubunit bridges in the 70S ribosome. The sequence is that of Large ribosomal subunit protein uL14 from Phocaeicola vulgatus (strain ATCC 8482 / DSM 1447 / JCM 5826 / CCUG 4940 / NBRC 14291 / NCTC 11154) (Bacteroides vulgatus).